The following is a 156-amino-acid chain: 2-C-methyl-D-erythritol 2,4-cyclodiphosphate synthase (156 aa).

The a divalent metal cation site is built by Asp-9 and His-11. Residues 9–11 (DAH) and 35–36 (HS) each bind 4-CDP-2-C-methyl-D-erythritol 2-phosphate. His-43 serves as a coordination point for a divalent metal cation. 57–59 (DIG) is a 4-CDP-2-C-methyl-D-erythritol 2-phosphate binding site.

It belongs to the IspF family. In terms of assembly, homotrimer. Requires a divalent metal cation as cofactor.

The enzyme catalyses 4-CDP-2-C-methyl-D-erythritol 2-phosphate = 2-C-methyl-D-erythritol 2,4-cyclic diphosphate + CMP. Its pathway is isoprenoid biosynthesis; isopentenyl diphosphate biosynthesis via DXP pathway; isopentenyl diphosphate from 1-deoxy-D-xylulose 5-phosphate: step 4/6. Functionally, involved in the biosynthesis of isopentenyl diphosphate (IPP) and dimethylallyl diphosphate (DMAPP), two major building blocks of isoprenoid compounds. Catalyzes the conversion of 4-diphosphocytidyl-2-C-methyl-D-erythritol 2-phosphate (CDP-ME2P) to 2-C-methyl-D-erythritol 2,4-cyclodiphosphate (ME-CPP) with a corresponding release of cytidine 5-monophosphate (CMP). The protein is 2-C-methyl-D-erythritol 2,4-cyclodiphosphate synthase of Hydrogenobaculum sp. (strain Y04AAS1).